Reading from the N-terminus, the 177-residue chain is ATP synthase subunit delta (177 aa).

The protein belongs to the ATPase delta chain family. F-type ATPases have 2 components, F(1) - the catalytic core - and F(0) - the membrane proton channel. F(1) has five subunits: alpha(3), beta(3), gamma(1), delta(1), epsilon(1). F(0) has three main subunits: a(1), b(2) and c(10-14). The alpha and beta chains form an alternating ring which encloses part of the gamma chain. F(1) is attached to F(0) by a central stalk formed by the gamma and epsilon chains, while a peripheral stalk is formed by the delta and b chains.

The protein localises to the cell inner membrane. F(1)F(0) ATP synthase produces ATP from ADP in the presence of a proton or sodium gradient. F-type ATPases consist of two structural domains, F(1) containing the extramembraneous catalytic core and F(0) containing the membrane proton channel, linked together by a central stalk and a peripheral stalk. During catalysis, ATP synthesis in the catalytic domain of F(1) is coupled via a rotary mechanism of the central stalk subunits to proton translocation. Its function is as follows. This protein is part of the stalk that links CF(0) to CF(1). It either transmits conformational changes from CF(0) to CF(1) or is implicated in proton conduction. In Tolumonas auensis (strain DSM 9187 / NBRC 110442 / TA 4), this protein is ATP synthase subunit delta.